A 155-amino-acid polypeptide reads, in one-letter code: DNA gyrase inhibitor (155 aa).

Belongs to the DNA gyrase inhibitor family. As to quaternary structure, interacts with DNA gyrase.

It localises to the cytoplasm. Its function is as follows. Inhibits the supercoiling activity of DNA gyrase. Acts by inhibiting DNA gyrase at an early step, prior to (or at the step of) binding of DNA by the gyrase. It protects cells against toxins that target DNA gyrase, by inhibiting activity of these toxins and reducing the formation of lethal double-strand breaks in the cell. The chain is DNA gyrase inhibitor from Erwinia billingiae (strain Eb661).